The primary structure comprises 576 residues: Calcium-dependent protein kinase 11 (576 aa).

The N-myristoyl glycine moiety is linked to residue G2. A disordered region spans residues 27-88 (PADAAPPALP…ANKAAPKVKR (62 aa)). Residues 41–56 (APSDQAPEPVTIPPSE) show a composition bias toward low complexity. A Protein kinase domain is found at 113-371 (YTIGKKLGQG…AHEALCHPWV (259 aa)). Residues 119–127 (LGQGQFGTT) and K142 each bind ATP. The active-site Proton acceptor is the D237. Residues 377–407 (APDKPLDSAVLSRLKQFSAMNKLKKMALRVI) are autoinhibitory domain. EF-hand domains are found at residues 414-449 (EEIA…VGAN), 450-485 (LMDS…INKV), 486-521 (EKED…FGIG), and 522-555 (DTRI…GNNA). Ca(2+) is bound by residues D427, D429, S431, H433, E438, D463, D465, S467, T469, E474, D499, D501, S503, Y505, E510, D533, D535, D537, R539, and E544.

It belongs to the protein kinase superfamily. Ser/Thr protein kinase family. CDPK subfamily.

The protein localises to the membrane. It carries out the reaction L-seryl-[protein] + ATP = O-phospho-L-seryl-[protein] + ADP + H(+). The catalysed reaction is L-threonyl-[protein] + ATP = O-phospho-L-threonyl-[protein] + ADP + H(+). Activated by calcium. Autophosphorylation may play an important role in the regulation of the kinase activity. In terms of biological role, may play a role in signal transduction pathways that involve calcium as a second messenger. The chain is Calcium-dependent protein kinase 11 from Oryza sativa subsp. japonica (Rice).